A 513-amino-acid chain; its full sequence is Maturase K (513 aa).

The protein belongs to the intron maturase 2 family. MatK subfamily.

Its subcellular location is the plastid. The protein resides in the chloroplast. Functionally, usually encoded in the trnK tRNA gene intron. Probably assists in splicing its own and other chloroplast group II introns. This is Maturase K from Phaseolus vulgaris (Kidney bean).